We begin with the raw amino-acid sequence, 345 residues long: N-acetyl-gamma-glutamyl-phosphate reductase (345 aa).

Cys-149 is a catalytic residue.

The protein belongs to the NAGSA dehydrogenase family. Type 1 subfamily.

It localises to the cytoplasm. The enzyme catalyses N-acetyl-L-glutamate 5-semialdehyde + phosphate + NADP(+) = N-acetyl-L-glutamyl 5-phosphate + NADPH + H(+). It participates in amino-acid biosynthesis; L-arginine biosynthesis; N(2)-acetyl-L-ornithine from L-glutamate: step 3/4. Its function is as follows. Catalyzes the NADPH-dependent reduction of N-acetyl-5-glutamyl phosphate to yield N-acetyl-L-glutamate 5-semialdehyde. This chain is N-acetyl-gamma-glutamyl-phosphate reductase, found in Marinobacter nauticus (strain ATCC 700491 / DSM 11845 / VT8) (Marinobacter aquaeolei).